A 183-amino-acid chain; its full sequence is MKNVTHSFVFLAHWPSAGSFGLNTDILATNLINLTVVVGVLIFFGKGVLKDLLDNRKQRILSTIRNSEELRRGTIEQLEKARIRLQKVELEADEYRMNGYSEIEREKANLINATSISLEQLEKSKNETLYFEKQRAMNQVRQRVFQQAVQGALGTLNSCLNTELHFRTIRANIGILGSLEWKR.

Residues 27 to 49 form a helical membrane-spanning segment; sequence LATNLINLTVVVGVLIFFGKGVL.

This sequence belongs to the ATPase B chain family. F-type ATPases have 2 components, F(1) - the catalytic core - and F(0) - the membrane proton channel. F(1) has five subunits: alpha(3), beta(3), gamma(1), delta(1), epsilon(1). F(0) has four main subunits: a(1), b(1), b'(1) and c(10-14). The alpha and beta chains form an alternating ring which encloses part of the gamma chain. F(1) is attached to F(0) by a central stalk formed by the gamma and epsilon chains, while a peripheral stalk is formed by the delta, b and b' chains.

The protein localises to the plastid. It is found in the chloroplast thylakoid membrane. F(1)F(0) ATP synthase produces ATP from ADP in the presence of a proton or sodium gradient. F-type ATPases consist of two structural domains, F(1) containing the extramembraneous catalytic core and F(0) containing the membrane proton channel, linked together by a central stalk and a peripheral stalk. During catalysis, ATP synthesis in the catalytic domain of F(1) is coupled via a rotary mechanism of the central stalk subunits to proton translocation. In terms of biological role, component of the F(0) channel, it forms part of the peripheral stalk, linking F(1) to F(0). The chain is ATP synthase subunit b, chloroplastic from Hordeum vulgare (Barley).